The sequence spans 154 residues: SsrA-binding protein (154 aa).

It belongs to the SmpB family.

The protein localises to the cytoplasm. In terms of biological role, required for rescue of stalled ribosomes mediated by trans-translation. Binds to transfer-messenger RNA (tmRNA), required for stable association of tmRNA with ribosomes. tmRNA and SmpB together mimic tRNA shape, replacing the anticodon stem-loop with SmpB. tmRNA is encoded by the ssrA gene; the 2 termini fold to resemble tRNA(Ala) and it encodes a 'tag peptide', a short internal open reading frame. During trans-translation Ala-aminoacylated tmRNA acts like a tRNA, entering the A-site of stalled ribosomes, displacing the stalled mRNA. The ribosome then switches to translate the ORF on the tmRNA; the nascent peptide is terminated with the 'tag peptide' encoded by the tmRNA and targeted for degradation. The ribosome is freed to recommence translation, which seems to be the essential function of trans-translation. The chain is SsrA-binding protein from Enterococcus hirae (strain ATCC 9790 / DSM 20160 / JCM 8729 / LMG 6399 / NBRC 3181 / NCIMB 6459 / NCDO 1258 / NCTC 12367 / WDCM 00089 / R).